The following is a 349-amino-acid chain: Oxygen-dependent coproporphyrinogen-III oxidase (349 aa).

Disordered stretches follow at residues M1–R21 and S37–K60. S105 is a binding site for substrate. Positions 109 and 119 each coordinate a divalent metal cation. H119 (proton donor) is an active-site residue. Residue N121–R123 coordinates substrate. A divalent metal cation is bound by residues H153 and H183. Residues Y273 to E308 form an important for dimerization region.

Belongs to the aerobic coproporphyrinogen-III oxidase family. In terms of assembly, homodimer. Requires a divalent metal cation as cofactor.

The protein resides in the cytoplasm. It catalyses the reaction coproporphyrinogen III + O2 + 2 H(+) = protoporphyrinogen IX + 2 CO2 + 2 H2O. It participates in porphyrin-containing compound metabolism; protoporphyrin-IX biosynthesis; protoporphyrinogen-IX from coproporphyrinogen-III (O2 route): step 1/1. In terms of biological role, involved in the heme and chlorophyll biosynthesis. Catalyzes the aerobic oxidative decarboxylation of propionate groups of rings A and B of coproporphyrinogen-III to yield the vinyl groups in protoporphyrinogen-IX. The chain is Oxygen-dependent coproporphyrinogen-III oxidase from Prochlorococcus marinus (strain MIT 9313).